Reading from the N-terminus, the 358-residue chain is WAT1-related protein At3g28080 (358 aa).

A run of 10 helical transmembrane segments spans residues 12–32, 42–62, 81–101, 105–125, 137–157, 187–207, 219–239, 245–265, 283–303, and 308–328; these read AVFL…STLF, IYPF…PSLF, IGLL…GIEY, TLAS…AVIF, SVAK…VIFY, WLIG…SFIL, FTVS…IGLV, PSIW…TGII, LYLA…GTIF, and LYLG…VVMW. One can recognise an EamA domain in the interval 27 to 155; it reads GLSTLFKVAT…LSLIGAFVVI (129 aa).

The protein belongs to the drug/metabolite transporter (DMT) superfamily. Plant drug/metabolite exporter (P-DME) (TC 2.A.7.4) family.

It is found in the membrane. The polypeptide is WAT1-related protein At3g28080 (Arabidopsis thaliana (Mouse-ear cress)).